A 230-amino-acid chain; its full sequence is Claudin-2 (230 aa).

Residues 1 to 7 (MASLGLQ) lie on the Cytoplasmic side of the membrane. The helical transmembrane segment at 8 to 28 (LVGYVLGLLGLLGTVIAMLLP) threads the bilayer. The Extracellular portion of the chain corresponds to 29–81 (SWRTSSYVGASIVTAVGFSKGLWMECATHSTGITQCDIYSTMLGLPADIQAAQ). An intrachain disulfide couples Cys-54 to Cys-64. A helical membrane pass occupies residues 82–102 (AMMVTSSAMSSLACIVSVVGM). The Cytoplasmic segment spans residues 103–116 (RCTVFFQESRAKDR). A helical transmembrane segment spans residues 117–137 (VAVVGGVFFILGGLLGFIPVA). Topologically, residues 138–162 (WNLHGILRDFYSPLVPDSMKFEIGE) are extracellular. The chain crosses the membrane as a helical span at residues 163 to 183 (ALYLGIISSLFSLIAGIFLCF). At 184-230 (SCSPQGNRSNYYDAYQAQPLATRSSPRPGQAPKGKSEFNSYSLTGYV) the chain is on the cytoplasmic side. Positions 205–230 (TRSSPRPGQAPKGKSEFNSYSLTGYV) are disordered. Lys-218 participates in a covalent cross-link: Glycyl lysine isopeptide (Lys-Gly) (interchain with G-Cter in SUMO). Ser-219 and Ser-223 each carry phosphoserine. Positions 220 to 230 (EFNSYSLTGYV) are enriched in polar residues. The interval 229 to 230 (YV) is interaction with TJP1, TJP2 and TJP3.

Belongs to the claudin family. In terms of assembly, can form homo- and heteropolymers with other claudins to mediate paracellular barrier and channel functions of tight junctions in response to physiological stimuli. Homopolymers interact with CLDN3, but not CLDN1, homopolymers. Directly interacts with TJP1/ZO-1, TJP2/ZO-2 and TJP3/ZO-3. Post-translationally, the disulfide bond is necessary for pore formation, but is not required for correct protein trafficking.

Its subcellular location is the cell junction. The protein localises to the tight junction. It localises to the cell membrane. The enzyme catalyses Na(+)(in) = Na(+)(out). It carries out the reaction K(+)(in) = K(+)(out). The catalysed reaction is Rb(+)(in) = Rb(+)(out). It catalyses the reaction Li(+)(in) = Li(+)(out). The enzyme catalyses Cs(+)(in) = Cs(+)(out). It carries out the reaction Ca(2+)(in) = Ca(2+)(out). The catalysed reaction is methylamine(out) = methylamine(in). It catalyses the reaction choline(out) = choline(in). The enzyme catalyses H2O(in) = H2O(out). Forms paracellular channels: polymerizes in tight junction strands with cation- and water-selective channels through the strands, conveying epithelial permeability in a process known as paracellular tight junction permeability. In intestinal epithelium, allows for sodium and water fluxes from the peritoneal side to the lumen of the intestine to regulate nutrient absorption and clear enteric pathogens as part of mucosal immune response. In kidney, allows passive sodium and calcium reabsorption across proximal tubules from the lumen back to the bloodstream. In the hepatobiliary tract, allows paracellular water and cation fluxes in the hepatic perivenous areas and biliary epithelium to generate bile flow and maintain osmotic gradients. The chain is Claudin-2 (CLDN2) from Bos taurus (Bovine).